A 238-amino-acid polypeptide reads, in one-letter code: tRNA (guanine-N(7)-)-methyltransferase (238 aa).

A compositionally biased stretch (polar residues) spans 1–12; that stretch reads MTDTAENQTPND. Residues 1-20 are disordered; the sequence is MTDTAENQTPNDRQAGHPRS. The S-adenosyl-L-methionine site is built by glutamate 70, aspartate 95, aspartate 122, and aspartate 145. Aspartate 145 is a catalytic residue. Residues lysine 149, aspartate 181, and 216-219 contribute to the substrate site; that span reads TKFE.

This sequence belongs to the class I-like SAM-binding methyltransferase superfamily. TrmB family.

It catalyses the reaction guanosine(46) in tRNA + S-adenosyl-L-methionine = N(7)-methylguanosine(46) in tRNA + S-adenosyl-L-homocysteine. Its pathway is tRNA modification; N(7)-methylguanine-tRNA biosynthesis. Functionally, catalyzes the formation of N(7)-methylguanine at position 46 (m7G46) in tRNA. The protein is tRNA (guanine-N(7)-)-methyltransferase of Neisseria meningitidis serogroup C (strain 053442).